The following is a 306-amino-acid chain: Nucleotide-binding protein amb4396 (306 aa).

A compositionally biased stretch (polar residues) spans 1 to 14 (MSDLHSSPTDQTSA). The tract at residues 1-20 (MSDLHSSPTDQTSAPAHAGG) is disordered. Residue 29–36 (GMSGAGKT) coordinates ATP. Position 77-80 (77-80 (DIRT)) interacts with GTP.

This sequence belongs to the RapZ-like family.

In terms of biological role, displays ATPase and GTPase activities. This is Nucleotide-binding protein amb4396 from Paramagnetospirillum magneticum (strain ATCC 700264 / AMB-1) (Magnetospirillum magneticum).